The primary structure comprises 582 residues: La-related protein 7 (582 aa).

At methionine 1 the chain carries N-acetylmethionine. Residues 1-27 (METESGNQEKVMEEESTEKKKEVEKKK) form a disordered region. Basic and acidic residues predominate over residues 10–25 (KVMEEESTEKKKEVEK). Residues 28–122 (RSRVKQVLAD…KPLGERPKDE (95 aa)) form the HTH La-type RNA-binding domain. Positions 125–203 (RTVYVELLPK…PRKPGIFPKT (79 aa)) constitute an RRM domain. 2 disordered regions span residues 188–368 (NPPE…ERHK) and 410–442 (KSES…RTQE). The span at 219 to 228 (KKKKKKKGRM) shows a compositional bias: basic residues. The span at 229-240 (KKEDNIQAKEEN) shows a compositional bias: basic and acidic residues. Lysine 237 is covalently cross-linked (Glycyl lysine isopeptide (Lys-Gly) (interchain with G-Cter in SUMO2)). The residue at position 257 (threonine 257) is a Phosphothreonine. Serine 258, serine 261, serine 273, serine 298, serine 299, and serine 300 each carry phosphoserine. Residues 316–335 (IQKDIIKEASEASKENRDIE) are compositionally biased toward basic and acidic residues. Position 337 is a phosphoserine (serine 337). At threonine 338 the chain carries Phosphothreonine. The residue at position 351 (serine 351) is a Phosphoserine. Positions 354-367 (KTKRKHKKKHKERH) are enriched in basic residues. A Glycyl lysine isopeptide (Lys-Gly) (interchain with G-Cter in SUMO2) cross-link involves residue lysine 410. A compositionally biased stretch (basic and acidic residues) spans 428–442 (KNEKTANREECRTQE). The xRRM domain maps to 450-563 (QFVSGVIVKI…TEKLITKAEK (114 aa)).

It belongs to the LARP7 family. Core component of the 7SK RNP complex, at least composed of 7SK RNA, LARP7, MEPCE, HEXIM1 (or HEXIM2) and P-TEFb (composed of CDK9 and CCNT1/cyclin-T1). Interacts with METTL16. Interacts with RBM7; upon genotoxic stress this interaction is enhanced, triggering the release of inactive P-TEFb complex from the core, yielding to P-TEFb complex activation. Associates with box C/D small nucleolar ribonucleoprotein (snoRNP) complexes.

It localises to the nucleus. Its subcellular location is the nucleoplasm. Functionally, RNA-binding protein that specifically binds distinct small nuclear RNA (snRNAs) and regulates their processing and function. Specifically binds the 7SK snRNA (7SK RNA) and acts as a core component of the 7SK ribonucleoprotein (RNP) complex, thereby acting as a negative regulator of transcription elongation by RNA polymerase II. The 7SK RNP complex sequesters the positive transcription elongation factor b (P-TEFb) in a large inactive 7SK RNP complex preventing RNA polymerase II phosphorylation and subsequent transcriptional elongation. The 7SK RNP complex also promotes snRNA gene transcription by RNA polymerase II via interaction with the little elongation complex (LEC). LARP7 specifically binds to the highly conserved 3'-terminal U-rich stretch of 7SK RNA; on stimulation, remains associated with 7SK RNA, whereas P-TEFb is released from the complex. LARP7 also acts as a regulator of mRNA splicing fidelity by promoting U6 snRNA processing. Specifically binds U6 snRNAs and associates with a subset of box C/D RNP complexes: promotes U6 snRNA 2'-O-methylation by facilitating U6 snRNA loading into box C/D RNP complexes. U6 snRNA 2'-O-methylation is required for mRNA splicing fidelity. Binds U6 snRNAs with a 5'-CAGGG-3' sequence motif. U6 snRNA processing is required for spermatogenesis. This Homo sapiens (Human) protein is La-related protein 7.